We begin with the raw amino-acid sequence, 132 residues long: MGLTSQLIPTLVCLLALTSTFVHGHNFNITIKEIIKMLNILTARNDSCMELTVKDVFTAPKNTSDKEIFCRAATVLRQIYTHNCSNRYLRGLYRNLSSMANKTCSMNEIKKSTLKDFLERLKVIMQKKYYRH.

A signal peptide spans 1 to 24 (MGLTSQLIPTLVCLLALTSTFVHG). N-linked (GlcNAc...) asparagine glycosylation is found at asparagine 28, asparagine 45, asparagine 62, asparagine 83, asparagine 95, and asparagine 101. Disulfide bonds link cysteine 48/cysteine 84 and cysteine 70/cysteine 104.

Belongs to the IL-4/IL-13 family.

Its subcellular location is the secreted. Participates in at least several B-cell activation processes as well as of other cell types. It is a costimulator of DNA-synthesis. It induces the expression of class II MHC molecules on resting B-cells. It enhances both secretion and cell surface expression of IgE and IgG1. It also regulates the expression of the low affinity Fc receptor for IgE (CD23) on both lymphocytes and monocytes. Positively regulates IL31RA expression in macrophages. Stimulates autophagy in dendritic cells by interfering with mTORC1 signaling and through the induction of RUFY4. In Canis lupus familiaris (Dog), this protein is Interleukin-4 (IL4).